The chain runs to 208 residues: 3-demethoxyubiquinol 3-hydroxylase (208 aa).

Residues Glu57, Glu87, His90, Glu139, Glu171, and His174 each contribute to the Fe cation site.

Belongs to the COQ7 family. Fe cation serves as cofactor.

Its subcellular location is the cell membrane. The catalysed reaction is a 5-methoxy-2-methyl-3-(all-trans-polyprenyl)benzene-1,4-diol + AH2 + O2 = a 3-demethylubiquinol + A + H2O. It functions in the pathway cofactor biosynthesis; ubiquinone biosynthesis. Its function is as follows. Catalyzes the hydroxylation of 2-nonaprenyl-3-methyl-6-methoxy-1,4-benzoquinol during ubiquinone biosynthesis. In Burkholderia ambifaria (strain ATCC BAA-244 / DSM 16087 / CCUG 44356 / LMG 19182 / AMMD) (Burkholderia cepacia (strain AMMD)), this protein is 3-demethoxyubiquinol 3-hydroxylase.